Here is a 220-residue protein sequence, read N- to C-terminus: Type-4 uracil-DNA glycosylase (220 aa).

C14 and C17 together coordinate [4Fe-4S] cluster. Uracil-binding positions include 41–43, F55, and N82; that span reads GEA. Positions 86 and 102 each coordinate [4Fe-4S] cluster. Residue H164 participates in uracil binding.

The protein belongs to the uracil-DNA glycosylase (UDG) superfamily. Type 4 (UDGa) family.

The enzyme catalyses Hydrolyzes single-stranded DNA or mismatched double-stranded DNA and polynucleotides, releasing free uracil.. Removes uracil bases that are present in DNA as a result of either deamination of cytosine or misincorporation of dUMP instead of dTMP. The sequence is that of Type-4 uracil-DNA glycosylase from Sulfurisphaera tokodaii (strain DSM 16993 / JCM 10545 / NBRC 100140 / 7) (Sulfolobus tokodaii).